The sequence spans 311 residues: Pyrimidine-specific ribonucleoside hydrolase RihA (311 aa).

Residue His-240 is part of the active site.

This sequence belongs to the IUNH family. RihA subfamily.

In terms of biological role, hydrolyzes cytidine or uridine to ribose and cytosine or uracil, respectively. The chain is Pyrimidine-specific ribonucleoside hydrolase RihA from Salmonella typhimurium (strain LT2 / SGSC1412 / ATCC 700720).